Here is a 293-residue protein sequence, read N- to C-terminus: Undecaprenyl-diphosphatase (293 aa).

Helical transmembrane passes span 3-23 (IALA…EFLP), 43-63 (KGKI…CWEF), 85-105 (ANVV…GKWI), 109-129 (LFNP…ILLA), 178-198 (FALV…MLFG), 203-223 (VATE…TVYE), 238-258 (IFAV…RWLL), and 269-289 (FAWY…SGLV).

This sequence belongs to the UppP family.

The protein localises to the cell inner membrane. It catalyses the reaction di-trans,octa-cis-undecaprenyl diphosphate + H2O = di-trans,octa-cis-undecaprenyl phosphate + phosphate + H(+). Functionally, catalyzes the dephosphorylation of undecaprenyl diphosphate (UPP). Confers resistance to bacitracin. This chain is Undecaprenyl-diphosphatase, found in Cupriavidus necator (strain ATCC 17699 / DSM 428 / KCTC 22496 / NCIMB 10442 / H16 / Stanier 337) (Ralstonia eutropha).